The primary structure comprises 328 residues: MSEKIRVLLYYKYVSIENAQEYAAKHLEFCKSIGLKGRILIADEGINGTVSGDYETTQKYMDWVHSDERFADLWFKIDEENQQAFRKMFVRYKKEIVHLGLEDNNFDSDINPLETTGKYLNPKQFKEALLDEDTVVLDTRNDYEYDLGHFRGAIRPDIRNFRELPQWVRDNKDKFMEKRVVVYCTGGVRCEKFSGWMVREGFKDVGQLHGGIATYGKDPEVQGELWDGAMYVFDDRISVPINHVNPTVISKDYFDGTPCERYVNCANPFCNKQIFASEENETKYVRGCSPECRAHERNRYVQENGLSRQEWAERLEAIGESLPEFVGA.

One can recognise a Rhodanese domain in the interval 130–224 (LDEDTVVLDT…YGKDPEVQGE (95 aa)). Cys184 serves as the catalytic Cysteine persulfide intermediate.

It belongs to the TrhO family.

The catalysed reaction is uridine(34) in tRNA + AH2 + O2 = 5-hydroxyuridine(34) in tRNA + A + H2O. Its function is as follows. Catalyzes oxygen-dependent 5-hydroxyuridine (ho5U) modification at position 34 in tRNAs. The polypeptide is tRNA uridine(34) hydroxylase (Streptococcus pyogenes serotype M6 (strain ATCC BAA-946 / MGAS10394)).